A 468-amino-acid polypeptide reads, in one-letter code: UDP-N-acetylmuramate--L-alanine ligase (468 aa).

Residue 121–127 coordinates ATP; the sequence is GSHGKTT.

This sequence belongs to the MurCDEF family.

The protein localises to the cytoplasm. It catalyses the reaction UDP-N-acetyl-alpha-D-muramate + L-alanine + ATP = UDP-N-acetyl-alpha-D-muramoyl-L-alanine + ADP + phosphate + H(+). The protein operates within cell wall biogenesis; peptidoglycan biosynthesis. In terms of biological role, cell wall formation. The polypeptide is UDP-N-acetylmuramate--L-alanine ligase (Borreliella afzelii (strain PKo) (Borrelia afzelii)).